The following is an 81-amino-acid chain: MQFTKLATILLVSLMGSAAIAAPATNNAAVDAAADATPAVEKRGFGCPFNENECHAHCLSIGRKFGFCAGPLRATCTCGKQ.

An N-terminal signal peptide occupies residues 1 to 21; that stretch reads MQFTKLATILLVSLMGSAAIA. Positions 22–43 are excised as a propeptide; sequence APATNNAAVDAAADATPAVEKR. 3 disulfide bridges follow: Cys47-Cys68, Cys54-Cys76, and Cys58-Cys78.

It belongs to the invertebrate defensin family.

The protein localises to the secreted. Antibacterial peptide with potent activity against both Gram-positive and Gram-negative bacteria. May kill bacteria via an intracellular action mode to affect protein folding. Does not show effects on tested filamentous fungi or on the yeast S.cerevisiae. Does not act by destroying the membrane integrity, which is consistent with its nonamphiphilic architecture. Acts more rapidly than vancomycin, suggesting it does not act by inhibiting cell-wall biosynthesis. Does not cause hemolysis and has no cytotoxic effect on HEK cells. In vivo, is as efficient as vancomycin to protect mouse peritonitis models from S.aureus and P.aeruginosa infections. The polypeptide is Fungal defensin micasin (Arthroderma otae (Microsporum canis)).